The chain runs to 480 residues: Glycerol-3-phosphate transporter (480 aa).

Topologically, residues 1 to 36 (MFGPFKPAPHIAELPAEKIDSTYKRLRWQVFAGIFF) are cytoplasmic. Residues 37–57 (GYAAYYFVRANFDLAQPGLIQ) traverse the membrane as a helical segment. Residues 58–64 (AGLYSKA) are Periplasmic-facing. Residues 65–85 (ELGVIGSAAGLAYGLSKFVMA) form a helical membrane-spanning segment. Over 86–94 (GMSDRSNPR) the chain is Cytoplasmic. The chain crosses the membrane as a helical span at residues 95-113 (VFLPFGLLLSGLCMTLMGL). Over 114-121 (FPWATSGI) the chain is Periplasmic. Residues 122–142 (AIMWVMIFLNGWFQGMGWPPC) traverse the membrane as a helical segment. Residues 143 to 161 (GRTMVHWWSKSERGTIVSI) are Cytoplasmic-facing. The helical transmembrane segment at 162-181 (WNTAHNIGGMVPGAMVLLAS) threads the bilayer. At 182-201 (AIFFSTHGIEAQAKDVWQQS) the chain is on the periplasmic side. Residues 202-219 (LYFPGIAAMIFAIPVYFV) form a helical membrane-spanning segment. Topologically, residues 220–274 (MRDTPQSCGLPSIEKWRNDYPDDYNEKTYENDLTAKEIFVTYVLKNKLLWYIAIA) are cytoplasmic. The helical transmembrane segment at 275 to 295 (NVFVYLIRYGVLKWSPVYLSE) threads the bilayer. Residues 296 to 300 (VKHFN) lie on the Periplasmic side of the membrane. Residues 301–321 (IKGTAWAYTIYELAAVPGTLL) traverse the membrane as a helical segment. The Cytoplasmic portion of the chain corresponds to 322–334 (CGWVSDKVFKGKR). Residues 335 to 354 (GLTGFIFMILTTAAVVAYWM) traverse the membrane as a helical segment. The Periplasmic segment spans residues 355–359 (NPATP). The helical transmembrane segment at 360 to 396 (EAELANYSAWYENPYQLTDFVLMTLIGFLIYGPVMLI) threads the bilayer. Residues 397–415 (GLHALELAPKKAAGTAAGF) are Cytoplasmic-facing. Residues 416-437 (TGLFGYLGGTVSASAVIGWAAQ) traverse the membrane as a helical segment. Over 438 to 442 (HYGWD) the chain is Periplasmic. Residues 443-463 (GGFYVMIGGGVLAVLLLLIVM) traverse the membrane as a helical segment. The Cytoplasmic segment spans residues 464 to 479 (VEEGKHKAKLGDTYGT).

It belongs to the major facilitator superfamily. Organophosphate:Pi antiporter (OPA) (TC 2.A.1.4) family.

It localises to the cell inner membrane. Functionally, responsible for glycerol-3-phosphate uptake. The sequence is that of Glycerol-3-phosphate transporter (glpT) from Haemophilus influenzae (strain ATCC 51907 / DSM 11121 / KW20 / Rd).